A 228-amino-acid chain; its full sequence is Sugar fermentation stimulation protein homolog (228 aa).

It belongs to the SfsA family.

This is Sugar fermentation stimulation protein homolog from Psychromonas ingrahamii (strain DSM 17664 / CCUG 51855 / 37).